A 104-amino-acid polypeptide reads, in one-letter code: Large ribosomal subunit protein uL24 (104 aa).

It belongs to the universal ribosomal protein uL24 family. Part of the 50S ribosomal subunit.

In terms of biological role, one of two assembly initiator proteins, it binds directly to the 5'-end of the 23S rRNA, where it nucleates assembly of the 50S subunit. One of the proteins that surrounds the polypeptide exit tunnel on the outside of the subunit. This Psychromonas ingrahamii (strain DSM 17664 / CCUG 51855 / 37) protein is Large ribosomal subunit protein uL24.